The sequence spans 218 residues: MATRSPSVVISDDEPGYDLDLFCIPNHYVEDLEKVFIPHGVIMDRTERLARDVMKEMGGHHIVALCVLKGGYKFFADLLDYIKALNRNSDRSIPMTVDFIRLKSYCNDQSTGDIKVIGGDDLSTLTGKNVLIVEDIIDTGKTMQTLLSLVKRYNLKMVKVASLLVKRTSRSVGYRPDFVGFEIPDKFVVGYALDYNEYFRDLNHICVISETGKAKYKA.

The residue at position 2 (Ala-2) is an N-acetylalanine. GMP is bound at residue Lys-69. At Lys-103 the chain carries N6-acetyllysine. Lys-115 is covalently cross-linked (Glycyl lysine isopeptide (Lys-Gly) (interchain with G-Cter in SUMO1); alternate). A Glycyl lysine isopeptide (Lys-Gly) (interchain with G-Cter in SUMO2); alternate cross-link involves residue Lys-115. GMP-binding positions include 134–142 (EDIIDTGKT), Lys-166, 186–188 (KFV), and Asp-194. Asp-138 acts as the Proton acceptor in catalysis. Thr-142 is modified (phosphothreonine). Asp-194 serves as a coordination point for Mg(2+).

Belongs to the purine/pyrimidine phosphoribosyltransferase family. Homotetramer. It depends on Mg(2+) as a cofactor.

The protein localises to the cytoplasm. It catalyses the reaction IMP + diphosphate = hypoxanthine + 5-phospho-alpha-D-ribose 1-diphosphate. The catalysed reaction is GMP + diphosphate = guanine + 5-phospho-alpha-D-ribose 1-diphosphate. Its pathway is purine metabolism; IMP biosynthesis via salvage pathway; IMP from hypoxanthine: step 1/1. Functionally, converts guanine to guanosine monophosphate, and hypoxanthine to inosine monophosphate. Transfers the 5-phosphoribosyl group from 5-phosphoribosylpyrophosphate onto the purine. Plays a central role in the generation of purine nucleotides through the purine salvage pathway. The protein is Hypoxanthine-guanine phosphoribosyltransferase (HPRT1) of Cricetulus griseus (Chinese hamster).